We begin with the raw amino-acid sequence, 425 residues long: Serine--tRNA ligase (425 aa).

L-serine is bound at residue 228–230 (TAE). Residue 259-261 (RSE) coordinates ATP. Residue Glu-282 coordinates L-serine. 346–349 (EIAS) lines the ATP pocket. Residue Ser-382 participates in L-serine binding.

This sequence belongs to the class-II aminoacyl-tRNA synthetase family. Type-1 seryl-tRNA synthetase subfamily. In terms of assembly, homodimer. The tRNA molecule binds across the dimer.

It localises to the cytoplasm. The enzyme catalyses tRNA(Ser) + L-serine + ATP = L-seryl-tRNA(Ser) + AMP + diphosphate + H(+). It catalyses the reaction tRNA(Sec) + L-serine + ATP = L-seryl-tRNA(Sec) + AMP + diphosphate + H(+). The protein operates within aminoacyl-tRNA biosynthesis; selenocysteinyl-tRNA(Sec) biosynthesis; L-seryl-tRNA(Sec) from L-serine and tRNA(Sec): step 1/1. Functionally, catalyzes the attachment of serine to tRNA(Ser). Is also able to aminoacylate tRNA(Sec) with serine, to form the misacylated tRNA L-seryl-tRNA(Sec), which will be further converted into selenocysteinyl-tRNA(Sec). The polypeptide is Serine--tRNA ligase (Rickettsia prowazekii (strain Madrid E)).